The primary structure comprises 156 residues: 6,7-dimethyl-8-ribityllumazine synthase (156 aa).

Residues Phe25, 59-61 (AWE), and 83-85 (AVI) each bind 5-amino-6-(D-ribitylamino)uracil. Residue 88 to 89 (ST) participates in (2S)-2-hydroxy-3-oxobutyl phosphate binding. His91 serves as the catalytic Proton donor. Asn116 is a 5-amino-6-(D-ribitylamino)uracil binding site. A (2S)-2-hydroxy-3-oxobutyl phosphate-binding site is contributed by Arg130.

It belongs to the DMRL synthase family. As to quaternary structure, forms an icosahedral capsid composed of 60 subunits, arranged as a dodecamer of pentamers.

The catalysed reaction is (2S)-2-hydroxy-3-oxobutyl phosphate + 5-amino-6-(D-ribitylamino)uracil = 6,7-dimethyl-8-(1-D-ribityl)lumazine + phosphate + 2 H2O + H(+). The protein operates within cofactor biosynthesis; riboflavin biosynthesis; riboflavin from 2-hydroxy-3-oxobutyl phosphate and 5-amino-6-(D-ribitylamino)uracil: step 1/2. Catalyzes the formation of 6,7-dimethyl-8-ribityllumazine by condensation of 5-amino-6-(D-ribitylamino)uracil with 3,4-dihydroxy-2-butanone 4-phosphate. This is the penultimate step in the biosynthesis of riboflavin. This is 6,7-dimethyl-8-ribityllumazine synthase from Acinetobacter baylyi (strain ATCC 33305 / BD413 / ADP1).